Reading from the N-terminus, the 93-residue chain is DNA-directed RNA polymerase subunit omega (93 aa).

The protein belongs to the RNA polymerase subunit omega family. In terms of assembly, the RNAP catalytic core consists of 2 alpha, 1 beta, 1 beta' and 1 omega subunit. When a sigma factor is associated with the core the holoenzyme is formed, which can initiate transcription.

It carries out the reaction RNA(n) + a ribonucleoside 5'-triphosphate = RNA(n+1) + diphosphate. Its function is as follows. Promotes RNA polymerase assembly. Latches the N- and C-terminal regions of the beta' subunit thereby facilitating its interaction with the beta and alpha subunits. The chain is DNA-directed RNA polymerase subunit omega from Actinobacillus pleuropneumoniae serotype 7 (strain AP76).